The chain runs to 157 residues: Transcription inhibitor protein Gfh1 (157 aa).

Residues 1–74 (MAREVKLTKA…LEDVLSRAVI (74 aa)) are a coiled coil.

This sequence belongs to the GreA/GreB family. Interacts with RNAP.

Functionally, inhibits all catalytic activities of RNA polymerase (RNAP) by partially occluding its substrate-binding site and preventing NTP binding. This Thermus aquaticus protein is Transcription inhibitor protein Gfh1 (gfh1).